A 214-amino-acid chain; its full sequence is ATP-dependent Clp protease proteolytic subunit (214 aa).

S114 acts as the Nucleophile in catalysis. H139 is an active-site residue.

It belongs to the peptidase S14 family. As to quaternary structure, fourteen ClpP subunits assemble into 2 heptameric rings which stack back to back to give a disk-like structure with a central cavity, resembling the structure of eukaryotic proteasomes.

It is found in the cytoplasm. It carries out the reaction Hydrolysis of proteins to small peptides in the presence of ATP and magnesium. alpha-casein is the usual test substrate. In the absence of ATP, only oligopeptides shorter than five residues are hydrolyzed (such as succinyl-Leu-Tyr-|-NHMec, and Leu-Tyr-Leu-|-Tyr-Trp, in which cleavage of the -Tyr-|-Leu- and -Tyr-|-Trp bonds also occurs).. In terms of biological role, cleaves peptides in various proteins in a process that requires ATP hydrolysis. Has a chymotrypsin-like activity. Plays a major role in the degradation of misfolded proteins. The protein is ATP-dependent Clp protease proteolytic subunit of Nitrosomonas eutropha (strain DSM 101675 / C91 / Nm57).